The primary structure comprises 341 residues: Phosphoribosylaminoimidazole-succinocarboxamide synthase, chloroplastic (341 aa).

The protein belongs to the SAICAR synthetase family.

The protein localises to the plastid. It is found in the chloroplast. It catalyses the reaction 5-amino-1-(5-phospho-D-ribosyl)imidazole-4-carboxylate + L-aspartate + ATP = (2S)-2-[5-amino-1-(5-phospho-beta-D-ribosyl)imidazole-4-carboxamido]succinate + ADP + phosphate + 2 H(+). The protein operates within purine metabolism; IMP biosynthesis via de novo pathway; 5-amino-1-(5-phospho-D-ribosyl)imidazole-4-carboxamide from 5-amino-1-(5-phospho-D-ribosyl)imidazole-4-carboxylate: step 1/2. The polypeptide is Phosphoribosylaminoimidazole-succinocarboxamide synthase, chloroplastic (PUR7) (Vigna aconitifolia (Moth bean)).